We begin with the raw amino-acid sequence, 655 residues long: Squalene-tetrahymanol cyclase THC1 (655 aa).

The signal sequence occupies residues 1-20 (MKKILIGLIIGLFLFSSVNA). N-linked (GlcNAc...) asparagine glycosylation is found at Asn-23, Asn-44, Asn-69, and Asn-77. The active-site Proton donor is Asp-373. PFTB repeat units lie at residues 393-435 (IPET…GIAN) and 515-562 (VQNS…GLLA).

This sequence belongs to the terpene cyclase/mutase family.

The protein resides in the membrane. It catalyses the reaction tetrahymanol = squalene + H2O. Its activity is regulated as follows. 2,3-iminosqualene and N,N-dimethyldodecylamine~N-oxlde are effective inhibitors with IC(50) values of 50 and 30 nM, respectively. In terms of biological role, squalene cyclase that catalyzes the oxygen-independent cyclization of squalene into tetrahymanol, a triterpenoid sterol with five cyclohexyl rings that is involved in membrane integrity, permeability and fluidity. The sequence is that of Squalene-tetrahymanol cyclase THC1 from Tetrahymena thermophila (strain SB210).